The following is an 85-amino-acid chain: Type 3 secretion system needle filament protein (85 aa).

Residues 13–41 are a coiled coil; sequence LDTVANALKEQANAANKDVNDAIKALQGT.

The core secretion machinery of the T3SS is composed of approximately 20 different proteins, including cytoplasmic components, a base, an export apparatus and a needle. This subunit polymerizes and forms the helical needle filament. Forms a stable heterotrimeric complex with PscE and PscG in the cytoplasm, blocking it in a monomeric state and preventing its polymerization.

The protein resides in the secreted. It is found in the cell surface. In terms of biological role, component of the type III secretion system (T3SS), also called injectisome, which is used to inject bacterial effector proteins into eukaryotic host cells, facilitating the establishment and dissemination of infection. PscF/SctF forms the external needle filament that protrudes from the bacterial surface. The polypeptide is Type 3 secretion system needle filament protein (Pseudomonas aeruginosa (strain ATCC 15692 / DSM 22644 / CIP 104116 / JCM 14847 / LMG 12228 / 1C / PRS 101 / PAO1)).